Reading from the N-terminus, the 445-residue chain is C4-dicarboxylate transport protein (445 aa).

The next 8 helical transmembrane spans lie at 24–44 (VLYV…WVSP), 62–82 (LIKM…IAHI), 105–125 (FALI…GLAA), 163–183 (GDIL…MALG), 201–221 (FGVI…AMAF), 237–257 (LVAL…GLIA), 322–342 (IYMT…LTFT), and 370–390 (AGTL…VFSI).

Belongs to the dicarboxylate/amino acid:cation symporter (DAACS) (TC 2.A.23) family.

It localises to the cell inner membrane. In terms of biological role, responsible for the transport of dicarboxylates such as succinate, fumarate, and malate from the periplasm across the membrane. The protein is C4-dicarboxylate transport protein of Rhodopseudomonas palustris (strain BisB5).